A 181-amino-acid chain; its full sequence is ADP-ribosylation factor 1 (181 aa).

Residue Gly2 is the site of N-myristoyl glycine attachment. GTP is bound by residues 24–31 (GLDAAGKT), 67–71 (DVGGQ), and 126–129 (NKQD).

This sequence belongs to the small GTPase superfamily. Arf family. Seedling shoots.

The protein localises to the golgi apparatus. It carries out the reaction GTP + H2O = GDP + phosphate + H(+). In terms of biological role, GTP-binding protein involved in protein trafficking; may modulate vesicle budding and uncoating within the Golgi apparatus. In Oryza sativa subsp. japonica (Rice), this protein is ADP-ribosylation factor 1.